Here is a 160-residue protein sequence, read N- to C-terminus: Cyanate hydratase (160 aa).

Residues Arg-100, Glu-103, and Ser-126 contribute to the active site.

The protein belongs to the cyanase family.

The enzyme catalyses cyanate + hydrogencarbonate + 3 H(+) = NH4(+) + 2 CO2. Catalyzes the reaction of cyanate with bicarbonate to produce ammonia and carbon dioxide. The chain is Cyanate hydratase from Aspergillus niger (strain ATCC MYA-4892 / CBS 513.88 / FGSC A1513).